The sequence spans 30 residues: Conotoxin Bt12.1 (30 aa).

Post-translationally, contains 3 disulfide bonds. As to expression, expressed by the venom duct.

It is found in the secreted. This is Conotoxin Bt12.1 from Conus betulinus (Beech cone).